Here is a 336-residue protein sequence, read N- to C-terminus: Vomeronasal type-1 receptor 102 (336 aa).

Residues 1 to 42 (MVGVQICQGMTSEILFFSLQPQFSNMMNKNSRLHIDSNIRNT) lie on the Extracellular side of the membrane. A helical membrane pass occupies residues 43–63 (FFTEIGIGVSANSLLLLFNIF). Residues 64–75 (KFIHGQRSRLTD) lie on the Cytoplasmic side of the membrane. Residues 76-96 (LPIGLLSLINLLMLLIMACIA) traverse the membrane as a helical segment. Residues 97–120 (TDIFISCRRWDDIICKSLLYLYRT) lie on the Extracellular side of the membrane. Cysteines 111 and 198 form a disulfide. Residues 121–140 (FRGLSLSTTCLLSVLQAIIL) form a helical membrane-spanning segment. Residues 141–157 (SPRSSCLAKYKHKPPHH) are Cytoplasmic-facing. Residues 158–178 (IFCAMLFLSVLYMFISSHLLL) traverse the membrane as a helical segment. Residues 179–213 (SIIATPNLTTNDFIHVSQSCSILPMSYLMQSMFST) are Extracellular-facing. N-linked (GlcNAc...) asparagine glycosylation is present at N185. Residues 214–234 (LLAIRNVFLISLIVLSTWYMV) traverse the membrane as a helical segment. The Cytoplasmic portion of the chain corresponds to 235 to 264 (ALLCRHRKQTRHLQDTSLSRKASPEQRATR). The helical transmembrane segment at 265–285 (SILMLRSLFVLMSIFDSIVSC) threads the bilayer. Over 286–296 (SRTMYLNDPTS) the chain is Extracellular. The chain crosses the membrane as a helical span at residues 297-317 (YSIQLLVVHIYATVSPFVFMI). The Cytoplasmic segment spans residues 318 to 336 (TEKHIVNYLKSMYVRVLNV).

This sequence belongs to the G-protein coupled receptor 1 family. As to expression, expressed in 1-4% of neurons of the vomeronasal organ. Only one pheromone receptor gene may be expressed in a particular neuron. Not expressed in the main olfactory epithelium.

It localises to the cell membrane. Functionally, putative pheromone receptor implicated in the regulation of social as well as reproductive behavior. This Rattus norvegicus (Rat) protein is Vomeronasal type-1 receptor 102 (Vom1r102).